A 570-amino-acid polypeptide reads, in one-letter code: Vacuolar protein sorting-associated protein 45 (570 aa).

2 positions are modified to phosphoserine: S307 and S441.

The protein belongs to the STXBP/unc-18/SEC1 family. In terms of assembly, interacts with STX6 and ZFYVE20. In terms of tissue distribution, ubiquitous; expression was highest in testis and in brain. Detected in every part of the brain.

The protein resides in the golgi apparatus membrane. Its subcellular location is the endosome membrane. In terms of biological role, may play a role in vesicle-mediated protein trafficking from the Golgi stack through the trans-Golgi network. The chain is Vacuolar protein sorting-associated protein 45 (Vps45) from Rattus norvegicus (Rat).